Reading from the N-terminus, the 478-residue chain is Transcript termination protein A18 (478 aa).

The Helicase ATP-binding domain maps to 98 to 254; sequence KVELKRPMYV…NDVINVSNSS (157 aa). An ATP-binding site is contributed by 111-118; that stretch reads LACGFGKT. Residues 204–207 carry the DESH box motif; sequence DESH. Residues 307–454 enclose the Helicase C-terminal domain; sequence ILDTIIYDFE…IITLAIEKLG (148 aa).

It belongs to the helicase family. Poxviruses subfamily. As to quaternary structure, interacts with G2. Might be part of a transcription complex composed at least of G2, A18, and H5.

It localises to the virion. In terms of biological role, DNA helicase which seems to act as a postreplicative transcription termination factor. Involved in ATP-dependent release of nascent RNA. Forms a stable complex with single-stranded DNA, and to a lesser extent RNA. The polypeptide is Transcript termination protein A18 (Erythrocebus patas (Red guenon)).